Reading from the N-terminus, the 296-residue chain is MSSGQGYVASGRPLLFDVVSVQSQVVYGHVGNNVAAPALRAHGLHPGIVPTVLLSNTPHYPTLHGGALPLSWFEGYLQDLQARGALQALRAILVGYLGSAEQARVLGRWIARIREVHPQVLVIVDPVMGDDDHGLYVTEGLAEASRECLVPQAHGLTPNSFELGLLTGCEVGRVDQAVAAARRLLAQGLRWVVVTSAAQQDCPPGQVQLLAVTASQAHLLRHQRVDTAPKGTGDLFCAELTAHLLAGASLERAVEASSRYLVQALACTRLADSAELLMPSRDPAQAQAVQWIPLEN.

Substrate is bound by residues Ser-23 and His-59. ATP is bound at residue Asp-125. Tyr-136 contributes to the Mg(2+) binding site. Residues Thr-157, Glu-162, Thr-195, 222–225 (HQRV), and Thr-232 contribute to the ATP site. Residue Glu-162 participates in Mg(2+) binding. Asp-234 serves as a coordination point for substrate.

Belongs to the pyridoxine kinase family. PdxK subfamily. Homodimer. It depends on Mg(2+) as a cofactor.

It catalyses the reaction pyridoxal + ATP = pyridoxal 5'-phosphate + ADP + H(+). It carries out the reaction pyridoxine + ATP = pyridoxine 5'-phosphate + ADP + H(+). The enzyme catalyses pyridoxamine + ATP = pyridoxamine 5'-phosphate + ADP + H(+). It functions in the pathway cofactor metabolism; pyridoxal 5'-phosphate salvage; pyridoxal 5'-phosphate from pyridoxal: step 1/1. It participates in cofactor metabolism; pyridoxal 5'-phosphate salvage; pyridoxine 5'-phosphate from pyridoxine: step 1/1. The protein operates within cofactor metabolism; pyridoxal 5'-phosphate salvage; pyridoxamine 5'-phosphate from pyridoxamine: step 1/1. Functionally, B6-vitamer kinase involved in the salvage pathway of pyridoxal 5'-phosphate (PLP). Catalyzes the phosphorylation of pyridoxine (PN), pyridoxal (PL), and pyridoxamine (PM), forming their respective 5'-phosphorylated esters, i.e. PNP, PLP and PMP. The sequence is that of Pyridoxine/pyridoxal/pyridoxamine kinase from Bordetella avium (strain 197N).